The following is a 274-amino-acid chain: Diaminopimelate epimerase (274 aa).

The substrate site is built by Asn-11, Gln-44, and Asn-64. Cys-73 (proton donor) is an active-site residue. Substrate-binding positions include 74–75, Asn-157, Asn-190, and 208–209; these read GN and ER. Cys-217 (proton acceptor) is an active-site residue. A substrate-binding site is contributed by 218 to 219; the sequence is GS.

It belongs to the diaminopimelate epimerase family. Homodimer.

It localises to the cytoplasm. It carries out the reaction (2S,6S)-2,6-diaminopimelate = meso-2,6-diaminopimelate. Its pathway is amino-acid biosynthesis; L-lysine biosynthesis via DAP pathway; DL-2,6-diaminopimelate from LL-2,6-diaminopimelate: step 1/1. Its function is as follows. Catalyzes the stereoinversion of LL-2,6-diaminopimelate (L,L-DAP) to meso-diaminopimelate (meso-DAP), a precursor of L-lysine and an essential component of the bacterial peptidoglycan. In Escherichia fergusonii (strain ATCC 35469 / DSM 13698 / CCUG 18766 / IAM 14443 / JCM 21226 / LMG 7866 / NBRC 102419 / NCTC 12128 / CDC 0568-73), this protein is Diaminopimelate epimerase.